The primary structure comprises 537 residues: Probable quinate permease (537 aa).

Residues 1–22 (MSILSLVEDRPTPKEVYNWKIY) lie on the Cytoplasmic side of the membrane. A helical transmembrane segment spans residues 23 to 43 (LLAAVASCTSCMIGYDSAFIG). The Extracellular segment spans residues 44–74 (TTISLQSFKDEFDWDSMSAAHQDLVSSNIVS). The chain crosses the membrane as a helical span at residues 75-95 (LYQAGAFFGAFFAYPIGHFWG). The Cytoplasmic portion of the chain corresponds to 96–97 (RK). The helical transmembrane segment at 98–118 (WGLMVSALIFTLGAGIMLGTN) threads the bilayer. Residues 119 to 130 (GDRGFGLLYGGR) lie on the Extracellular side of the membrane. A helical transmembrane segment spans residues 131–151 (VLAGLGVGAGSNITPIYISEL). At 152–159 (SPPAIRGR) the chain is on the cytoplasmic side. Residues 160 to 180 (LVGVYELGWQIGGLVGFWICY) traverse the membrane as a helical segment. Residues 181–193 (GVDETLPPSHKQW) lie on the Extracellular side of the membrane. The helical transmembrane segment at 194 to 214 (IIPFAVQLIPSGLLIIGALFL) threads the bilayer. Over 215–285 (KESPRWLFLR…AWTNKKILYR (71 aa)) the chain is Cytoplasmic. A helical membrane pass occupies residues 286–306 (LFLGSMLFFWQNGSGINAINY). At 307-325 (YSPTVFKSIGVTGSNTSLF) the chain is on the extracellular side. The chain crosses the membrane as a helical span at residues 326–346 (TTGIFGVVKTVVTFIWLLWLI). The Cytoplasmic segment spans residues 347-352 (DRVGRR). The chain crosses the membrane as a helical span at residues 353–373 (LLLLIGAAGGSICLWIVGAYI). The Extracellular segment spans residues 374 to 387 (KIARPSERENKQMD). Residues 388-408 (GGGIAAMFFFYLWTVFYTPSW) traverse the membrane as a helical segment. Over 409-456 (NGTPWVINSEMFDPNIRSLAQACAAGSNWLWNFLISRFTPQMFAKMDY) the chain is Cytoplasmic. The chain crosses the membrane as a helical span at residues 457–477 (GVYFFFASLMILSIIFVFFLI). Residues 478 to 537 (PETKGIPLESMDRLFETQPIWRAHGTLLKQIREDEERFRHDLEDSGFVKSTDRQVEVVDA) lie on the Extracellular side of the membrane.

It belongs to the major facilitator superfamily. Sugar transporter (TC 2.A.1.1) family. As to quaternary structure, interacts with creB. Post-translationally, ubiquitinated. Deubiquitinated by creB, probably to control its activity or amount.

Its subcellular location is the cell membrane. Integral membrane transporter that imports quinic acid to be catabolized as a carbon source. In Aspergillus flavus (strain ATCC 200026 / FGSC A1120 / IAM 13836 / NRRL 3357 / JCM 12722 / SRRC 167), this protein is Probable quinate permease (qutD).